Here is an 836-residue protein sequence, read N- to C-terminus: Spliceosome associated factor 3, U4/U6 recycling protein (836 aa).

HAT repeat units lie at residues 127–163, 296–329, 331–367, 418–451, and 453–486; these read EDFK…YEMS, KLPQ…FERD, RPNE…LLRR, KNMD…LERQ, and GDKE…FERE. The tract at residues 507-585 is disordered; that stretch reads RAIRPQKKVS…APGSFAVQKA (79 aa). Residues 540-550 show a composition bias toward basic and acidic residues; it reads IVKKVKGDDGG. Residues 558–579 are compositionally biased toward low complexity; that stretch reads SNAKSSSAVSSSNASSTPAPGS. RRM domains lie at 593–668 and 683–760; these read RTIF…ANDP and SKVF…LSNP. 2 disordered regions span residues 757 to 786 and 811 to 830; these read LSNP…PRKG and AMDV…DQFR. Polar residues predominate over residues 816 to 827; that stretch reads EGTSTSQPLSND.

In terms of assembly, forms a complex composed of sart-3, terminal uridylyltransferase usip-1 and U6 snRNA; complex formation is mediated by usip-1 and sart-3 binding to U6 snRNA. Associates with U4 and U6 snRNP complexes, probably by interacting with U4 and U6 snRNAs. Ubiquitously expressed.

It is found in the nucleus. Its subcellular location is the nucleoplasm. Its function is as follows. U6 snRNP-binding protein that functions as a recycling factor of the splicing machinery. Promotes the initial reassembly of U4 and U6 snRNPs following their ejection from the spliceosome during its maturation. This Caenorhabditis elegans protein is Spliceosome associated factor 3, U4/U6 recycling protein.